Here is a 398-residue protein sequence, read N- to C-terminus: UPF0261 protein RA0729 (398 aa).

The protein belongs to the UPF0261 family.

The polypeptide is UPF0261 protein RA0729 (Rhizobium meliloti (strain 1021) (Ensifer meliloti)).